We begin with the raw amino-acid sequence, 64 residues long: Large ribosomal subunit protein bL35 (64 aa).

Over residues 1–26 (MPKMKSHRGASKRFKRTASGKLKRSH) the composition is skewed to basic residues. Positions 1 to 42 (MPKMKSHRGASKRFKRTASGKLKRSHAYTSHLFANKSTKAKR) are disordered.

Belongs to the bacterial ribosomal protein bL35 family.

In Exiguobacterium sp. (strain ATCC BAA-1283 / AT1b), this protein is Large ribosomal subunit protein bL35.